Consider the following 205-residue polypeptide: Small ribosomal subunit protein uS4c (205 aa).

A disordered region spans residues 16–40 (GKLPSLTNKTSKKRKSPGQPATSFK). The region spanning 93–161 (MRLDNIVHRI…IQKNIESKEL (69 aa)) is the S4 RNA-binding domain.

Belongs to the universal ribosomal protein uS4 family. In terms of assembly, part of the 30S ribosomal subunit. Contacts protein S5. The interaction surface between S4 and S5 is involved in control of translational fidelity.

The protein localises to the plastid. It is found in the chloroplast. Functionally, one of the primary rRNA binding proteins, it binds directly to 16S rRNA where it nucleates assembly of the body of the 30S subunit. In terms of biological role, with S5 and S12 plays an important role in translational accuracy. The polypeptide is Small ribosomal subunit protein uS4c (rps4) (Euglena gracilis).